The primary structure comprises 254 residues: Probable protein ABIL5 (254 aa).

Positions 1–26 (MEVAEAGVDGVAGRRQQEEASGAAPF) are disordered.

Belongs to the ABI family. As to quaternary structure, binds SCAR.

The protein resides in the cytoplasm. Its subcellular location is the cytoskeleton. Its function is as follows. Involved in regulation of actin and microtubule organization. Part of a WAVE complex that activates the Arp2/3 complex. The sequence is that of Probable protein ABIL5 from Oryza sativa subsp. japonica (Rice).